Reading from the N-terminus, the 902-residue chain is MEQINSNSRKKKQQLEVFKYFASVLTKEDKPISISNGMLDMPTVNSSKLTAGNGKPDTEKLTGELILTYDDFIELISSSKTIYSKFTDHSFNLNQIPKNVFGCIFFAIDEQNKGYLTLNDWFYFNNLLEYDNYHLIILYEFFRKFDVENLKAKQKKELGSSSFNLKAADDRIKSINYGNRFLSFDDLLLNLNQFKDTIRLLHESIDDNFVKDNKLLLDWNDFRFLKFYKCYHENEEYLSLNSLVTILQNDLKNEKIFIGFDRLAQMDSQGHRLALSKNQLTYLLRLFYSHRVSADIFSSLNLSNTELLKADNNSIPYNVFKDIFYLFQNFDLLNQIFHKYVTENNLNEQDIREQIVTKNDFMTVLNAQYNKVNNIIEFSPSQINLLFSIVANSKENRRLRKRNQDRDDELLNDHHYDSDIDFFIHNEYLHGVSRSRKNLESFNDYYHDLSDGFDQDSGVKKASKASTGLFESVFGGKKDKATMRSDLTIEDFMKILNPNYLNDLVHQMELQKNQNESLYINYYFYPIFDSLYNFSLGSIAGCIGATVVYPIDFIKTRMQAQRSLAQYKNSIDCLLKIISREGIKGLYSGLGPQLIGVAPEKAIKLTVNDFMRNRLTDKNGKLSLFPEIISGASAGACQVIFTNPLEIVKIRLQVQSDYVGENIQQANETATQIVKKLGLRGLYNGVAACLMRDVPFSAIYFPTYAHLKKDLFDFDPNDKTKRNRLKTWELLTAGAIAGMPAAFLTTPFDVIKTRLQIDPRKGETKYNGIFHAIRTILKEESFRSFFKGGGARVLRSSPQFGFTLAAYELFKGFIPSPDNKLKSREGRKRFCIDDDAGNEETVVHSNGELPQQKFYSDDRKHANYYYKSCQIAKTFIDLDNNFSRFDSSVYKNFQEHLRSING.

3 Solcar repeats span residues 528-614, 622-710, and 725-813; these read FDSL…MRNR, LSLF…LKKD, and LKTW…FKGF. The next 6 helical transmembrane spans lie at 534–554, 591–611, 622–642, 681–702, 731–751, and 786–806; these read FSLGSIAGCIGATVVYPIDFI, GPQLIGVAPEKAIKLTVNDFM, LSLFPEIISGASAGACQVIFT, GLYNGVAACLMRDVPFSAIYFP, LTAGAIAGMPAAFLTTPFDVI, and FKGGGARVLRSSPQFGFTLAA.

The protein belongs to the mitochondrial carrier (TC 2.A.29) family.

Its subcellular location is the mitochondrion inner membrane. Its function is as follows. Calcium-dependent mitochondrial aspartate and glutamate carrier. Transport of glutamate in mitochondria is required for mitochondrial transamination reactions and ornithine synthesis. Plays also a role in malate-aspartate NADH shuttle, which is critical for growth on acetate and fatty acids. This is Mitochondrial aspartate-glutamate transporter AGC1 (AGC1) from Saccharomyces cerevisiae (strain ATCC 204508 / S288c) (Baker's yeast).